The chain runs to 106 residues: Thioredoxin (106 aa).

An N6-acetyllysine modification is found at K3. The 104-residue stretch at 3–106 (KQIESKTAFQ…KLEATINELV (104 aa)) folds into the Thioredoxin domain. K8 bears the N6-succinyllysine mark. Active-site nucleophile residues include C32 and C35. A disulfide bond links C32 and C35. N6-acetyllysine is present on K39. 2 positions are modified to S-nitrosocysteine: C62 and C69. Position 73 is an S-nitrosocysteine; alternate (C73). K95 is modified (N6-acetyllysine; alternate). K95 is subject to N6-succinyllysine; alternate.

This sequence belongs to the thioredoxin family. As to quaternary structure, homodimer; disulfide-linked. Interacts with TXNIP through the redox-active site. Interacts with MAP3K5 and CASP3. Interacts with APEX1; the interaction stimulates the FOS/JUN AP-1 DNA-binding activity in a redox-dependent manner. In terms of processing, in the fully reduced protein, both Cys-69 and Cys-73 are nitrosylated in response to nitric oxide (NO). When two disulfide bonds are present in the protein, only Cys-73 is nitrosylated. Cys-73 can serve as donor for nitrosylation of target proteins.

It localises to the nucleus. It is found in the cytoplasm. Its subcellular location is the secreted. In terms of biological role, participates in various redox reactions through the reversible oxidation of its active center dithiol to a disulfide and catalyzes dithiol-disulfide exchange reactions. Plays a role in the reversible S-nitrosylation of cysteine residues in target proteins, and thereby contributes to the response to intracellular nitric oxide. Nitrosylates the active site Cys of CASP3 in response to nitric oxide (NO), and thereby inhibits caspase-3 activity. Induces the FOS/JUN AP-1 DNA binding activity in ionizing radiation (IR) cells through its oxidation/reduction status and stimulates AP-1 transcriptional activity. In Pongo abelii (Sumatran orangutan), this protein is Thioredoxin (TXN).